Here is a 180-residue protein sequence, read N- to C-terminus: Signal peptidase complex subunit 2 (180 aa).

Topologically, residues 1-45 (MSDERITVVNKWDGPTVKNGLDEVVKKILNDKVGWTEQHNLMNLR) are cytoplasmic. The helical transmembrane segment at 46–66 (LLISFIGVAFSAFACGYDFYA) threads the bilayer. At 67–72 (PFPKSK) the chain is on the lumenal side. Residues 73-93 (IVLLVCSVSYFICMGVLQLFQ) form a helical membrane-spanning segment. Over 94-180 (WYVEKDCFYE…LWARLIRSEQ (87 aa)) the chain is Cytoplasmic.

This sequence belongs to the SPCS2 family. In terms of assembly, component of the signal peptidase complex (SPC) composed of a catalytic subunit sec-11 and three accessory subunits spcs-1, spcs-2 and spcs-3. The complex induces a local thinning of the ER membrane which is used to measure the length of the signal peptide (SP) h-region of protein substrates. This ensures the selectivity of the complex towards h-regions shorter than 18-20 amino acids.

The protein resides in the endoplasmic reticulum membrane. Its function is as follows. Component of the signal peptidase complex (SPC) which catalyzes the cleavage of N-terminal signal sequences from nascent proteins as they are translocated into the lumen of the endoplasmic reticulum. Enhances the enzymatic activity of SPC and facilitates the interactions between different components of the translocation site. The chain is Signal peptidase complex subunit 2 from Caenorhabditis briggsae.